The primary structure comprises 267 residues: Cerberus (267 aa).

The N-terminal stretch at 1-17 (MHLLLFQLLVLLPLGKT) is a signal peptide. 2 disordered regions span residues 19-52 (RHQD…EAEE) and 87-113 (WKKP…QSLI). The N-linked (GlcNAc...) asparagine glycan is linked to Asn-26. Basic and acidic residues predominate over residues 88–101 (KKPEREMHPSRDSD). 4 cysteine pairs are disulfide-bonded: Cys-162–Cys-209, Cys-176–Cys-223, Cys-186–Cys-239, and Cys-190–Cys-241. In terms of domain architecture, CTCK spans 162–246 (CRTVPFSQTI…EECQCKVKTE (85 aa)). An N-linked (GlcNAc...) asparagine glycan is attached at Asn-222.

This sequence belongs to the DAN family. As to quaternary structure, forms monomers and predominantly dimers. Post-translationally, N-glycosylated.

Its subcellular location is the secreted. In terms of biological role, cytokine that may play a role in anterior neural induction and somite formation during embryogenesis in part through a BMP-inhibitory mechanism. Can regulate Nodal signaling during gastrulation as well as the formation and patterning of the primitive streak. The sequence is that of Cerberus (CER1) from Homo sapiens (Human).